We begin with the raw amino-acid sequence, 336 residues long: tRNA-cytidine(32) 2-sulfurtransferase (336 aa).

The disordered stretch occupies residues 1–34 (MNAPEILNGAATASPADATEATQTAARAKTPLTR). Residues 10–22 (AATASPADATEAT) show a composition bias toward low complexity. Positions 75–80 (SGGKDS) match the PP-loop motif motif. [4Fe-4S] cluster contacts are provided by cysteine 150, cysteine 153, and cysteine 241.

This sequence belongs to the TtcA family. Homodimer. Requires Mg(2+) as cofactor. It depends on [4Fe-4S] cluster as a cofactor.

The protein localises to the cytoplasm. It carries out the reaction cytidine(32) in tRNA + S-sulfanyl-L-cysteinyl-[cysteine desulfurase] + AH2 + ATP = 2-thiocytidine(32) in tRNA + L-cysteinyl-[cysteine desulfurase] + A + AMP + diphosphate + H(+). The protein operates within tRNA modification. In terms of biological role, catalyzes the ATP-dependent 2-thiolation of cytidine in position 32 of tRNA, to form 2-thiocytidine (s(2)C32). The sulfur atoms are provided by the cysteine/cysteine desulfurase (IscS) system. The chain is tRNA-cytidine(32) 2-sulfurtransferase from Paraburkholderia phytofirmans (strain DSM 17436 / LMG 22146 / PsJN) (Burkholderia phytofirmans).